The following is a 541-amino-acid chain: Molybdate transporter 1 (541 aa).

5 helical membrane-spanning segments follow: residues 24-44 (LLLS…PLLL), 58-78 (LLFS…PLPV), 98-118 (TVAA…TGGL), 137-157 (AGMS…GWLW), and 168-188 (GLGE…GLVV). The disordered stretch occupies residues 193 to 213 (QQQQQQQSGEKPQERRKKRSK). Transmembrane regions (helical) follow at residues 214-234 (MPVQ…FAVV) and 287-307 (MAIA…SALA). The segment at 317–366 (PQLYADDESSDSPLSPSPSASSSSLSSAPPQTPSAETPKPLSSPTSAEEG) is disordered. Residues 327–351 (DSPLSPSPSASSSSLSSAPPQTPSA) are compositionally biased toward low complexity. A run of 2 helical transmembrane segments spans residues 413 to 433 (IILL…PGLL) and 435 to 455 (LLGK…GVEL). The interval 510–541 (TEKGRGGEQGLLGEEEEEEEQGRVDEESPLLR) is disordered.

This sequence belongs to the SLC26A/SulP transporter (TC 2.A.53) family.

It is found in the vacuole membrane. In terms of biological role, exports stored molybdate from the vacuole into the cytosol, making it available for molybdate cofactor (Moco) biosynthesis. Plays a role in molybdate homeostasis as high cytosolic levels of molybdate are toxic to cells. Not required for molybdate import into cells. This chain is Molybdate transporter 1, found in Neurospora crassa (strain ATCC 24698 / 74-OR23-1A / CBS 708.71 / DSM 1257 / FGSC 987).